A 384-amino-acid polypeptide reads, in one-letter code: Putative RNA methyltransferase slr0064 (384 aa).

The region spanning 53–164 is the THUMP domain; the sequence is LLYRINLWSR…QNHCQLSLDS (112 aa).

It belongs to the methyltransferase superfamily.

The chain is Putative RNA methyltransferase slr0064 from Synechocystis sp. (strain ATCC 27184 / PCC 6803 / Kazusa).